We begin with the raw amino-acid sequence, 901 residues long: MENFQYSVQLSDQDWAEFSAAAEECGLLQAGLASGDEPLSSDTDQRDSRGSSPPGPSPFLEGQLTPGGSSWPSFEEEDKAATRQLVSRSWHEPMLAPEAGQQTPSTSAQSEARLSLSPGATPLVQGSSLPGPVSSRDEMQRLLRGPAPRGPAPTPTGEPAGSPESPVHSAAPQRSPGSPGAPPRSPGRKKRRTAGTKAGGRSGGPGPAPTQLDSPLLTEAKPEDSFGPAGSRGKGLPAGAAKQTAGTGPESAGAPEQVAGQGPGVDLSTSVSTTEQGTDRLGMSPRADPCAASTSDPGAPLDVTIKSDVALSTPASEPQPDKPQSTPAFKPQPDEPQSTPAFKPQPDESQSTSAFNAQPNEPQSTPTFSPQPDEPQSTPAFKPQPDEPQSTSAFNAQPNEPQSTLAFSPQPDEPQSTPAFKPQPDEPQSTPAFNVQPNEPQSTPAFSPQPNEPQSTPAFKPQPDEPQSTPAFNTQPNEPQSTPTFKPRLDVDQLMPGPVVQPEVDSSMPASKAVPCTALPHLVLEAGSDVGVSTPPAPTPQAGPDMVEAEVVPVAKLGLSPVRSLEGHQQNPRGEPSTDAPGHHTGEPPLGPIQAPKKKKVRFSMAMPSSEEPGSGEVSGPLSPATAPRMASGGHRGSGAWDSVAVGPRSPQPRILKHLPPPAPSASMGPGRRSCFAVTLPEAYDFFFCDTIEEEDEEAEGAAEAAQAPAEVQWPDVCEFFFQESQIQRSRHQEGRSQAPLLKAGSVPAPPPGDPMPISIPEAYEHFLEEDRSGGTLGPAALLQMQATEPSRSVLWGVGTGAPPESSPATVEQLTLAIREAVAPRGPLTSFTFSQKDMCMVFVAFATWAVRTSDLHAPDAWKTVLLANIGTISAIRYFRRQVERGRHSRSRSPSPSSSPSP.

3 disordered regions span residues glutamine 29 to serine 511, serine 564 to glycine 671, and arginine 731 to proline 752. Polar residues predominate over residues glycine 100–alanine 112. Low complexity predominate over residues glycine 157 to serine 178. Polar residues-rich tracts occupy residues leucine 267 to glutamine 276, aspartate 347 to proline 379, glutamate 387 to proline 418, glutamate 426 to proline 457, and glutamate 465 to threonine 484. Residues proline 608–proline 624 are compositionally biased toward low complexity.

It localises to the cytoplasm. The protein localises to the nucleus. In terms of biological role, regulates the expression of selective PPARGC1A/B and ESRRA/B/G target genes with roles in glucose and lipid metabolism, energy transfer, contractile function, muscle mitochondrial biogenesis and oxidative capacity. Required for the efficient induction of MT-CO2, MT-CO3, COX4I1, TFB1M, TFB2M, POLRMT and SIRT3 by PPARGC1A. Positively regulates the PPARGC1A/ESRRG-induced expression of CKMT2, TNNI3 and SLC2A4 and negatively regulates the PPARGC1A/ESRRG-induced expression of PDK4. This chain is PGC-1 and ERR-induced regulator in muscle protein 1 (PERM1), found in Bos taurus (Bovine).